Consider the following 231-residue polypeptide: Protein crossbronx homolog (231 aa).

The UBC core domain occupies 14-168 (LQEYKILTEY…VEECVRLSQA (155 aa)).

Belongs to the ubiquitin-conjugating enzyme family. FTS subfamily.

The protein is Protein crossbronx homolog of Culex quinquefasciatus (Southern house mosquito).